A 487-amino-acid chain; its full sequence is MPCYSLMVQGTTSDAGKSTLVAALCRILKRRGVRVAPFKPQNMALNSAVTVDGGEIGRAQALQALACGLAPHTDFNPVLLKPTTDKKAQVIIHGKVAIDLDAKAYHAYKPRAMGAVLESWARLTAEYECVVVEGAGSPAEINLRDRDIANMGFAEAVDCPVIIVADIDRGGVFAHLVGTLELLSPSEKNRVKGFVINRFRGDIGLLESGLTWLEARTGKPVLGVLPYLHGLMLDAEDAIATAAVGGKKAAKLKVVAPAYPRVSNHNDLDPLRLHPEVDFRWIGPGETPPAADLIVLPGSKAVRADLDWLRAQGWDKAIHKHLRYGGKLIGLCGGYQMLGRMIHDPQGLEGQPGSTPGLGVLAVETTLEAEKQLRNVSGHLSLPGRPAMTGYEIHLGVTRGEGLAKGAVELADGVHDGAISADDQVFATYCHGVLDHPEALTALLAWAGMSESEQVDFAARREADLDRLADSVEAALDWEKLSALLPG.

The 189-residue stretch at 251-439 (KLKVVAPAYP…CHGVLDHPEA (189 aa)) folds into the GATase cobBQ-type domain. Catalysis depends on Cys-332, which acts as the Nucleophile. The active site involves His-431.

This sequence belongs to the CobB/CobQ family. CobQ subfamily.

It participates in cofactor biosynthesis; adenosylcobalamin biosynthesis. In terms of biological role, catalyzes amidations at positions B, D, E, and G on adenosylcobyrinic A,C-diamide. NH(2) groups are provided by glutamine, and one molecule of ATP is hydrogenolyzed for each amidation. The sequence is that of Cobyric acid synthase from Dechloromonas aromatica (strain RCB).